We begin with the raw amino-acid sequence, 669 residues long: DNA ligase (669 aa).

Residues 33–37 (DVTYD), 82–83 (SL), and Glu115 each bind NAD(+). Residue Lys117 is the N6-AMP-lysine intermediate of the active site. 4 residues coordinate NAD(+): Arg138, Glu172, Lys286, and Lys310. Zn(2+) contacts are provided by Cys401, Cys404, Cys417, and Cys422. A BRCT domain is found at 589–669 (IDSSFLFGKK…DIKNLVNLDD (81 aa)).

This sequence belongs to the NAD-dependent DNA ligase family. LigA subfamily. It depends on Mg(2+) as a cofactor. Mn(2+) serves as cofactor.

The enzyme catalyses NAD(+) + (deoxyribonucleotide)n-3'-hydroxyl + 5'-phospho-(deoxyribonucleotide)m = (deoxyribonucleotide)n+m + AMP + beta-nicotinamide D-nucleotide.. Its function is as follows. DNA ligase that catalyzes the formation of phosphodiester linkages between 5'-phosphoryl and 3'-hydroxyl groups in double-stranded DNA using NAD as a coenzyme and as the energy source for the reaction. It is essential for DNA replication and repair of damaged DNA. This chain is DNA ligase, found in Borrelia recurrentis (strain A1).